A 100-amino-acid polypeptide reads, in one-letter code: Ribosomal biogenesis factor (100 aa).

A Phosphoserine modification is found at Ser-19. An N6-acetyllysine modification is found at Lys-21. Ser-69 carries the phosphoserine modification.

As to quaternary structure, associates with the pre-60S ribosomal particles.

It is found in the nucleus. Its subcellular location is the nucleolus. Its function is as follows. Trans-acting factor in ribosome biogenesis required for efficient 40S and 60S subunit production. The chain is Ribosomal biogenesis factor (RBIS) from Bos taurus (Bovine).